The following is an 810-amino-acid chain: Phospholipase D alpha 1 (810 aa).

A propeptide spanning residues 1–36 (MAQHLLHGTLHATIYEVDDLHTGGLRSGFFGKILAN) is cleaved from the precursor. The 126-residue stretch at 1-126 (MAQHLLHGTL…IHGEEVDQWV (126 aa)) folds into the C2 domain. Asp187 is a Ca(2+) binding site. Residues 327 to 366 (AMFTHHQKIVVVDSEMPSRGGSQMRRIVSFVGGIDLCDGR) form the PLD phosphodiesterase 1 domain. Catalysis depends on residues His332, Lys334, and Asp339. His332 serves as a coordination point for a 1,2-diacyl-sn-glycero-3-phosphate. Ca(2+) contacts are provided by His372 and His406. A 1,2-diacyl-sn-glycero-3-phosphate contacts are provided by Gln522 and His661. Residues 656–683 (FMIYVHTKMMIVDDEYIIIGSANINQRS) form the PLD phosphodiesterase 2 domain. Active-site residues include His661, Lys663, and Asp668. Glu722 provides a ligand contact to Ca(2+).

It belongs to the phospholipase D family. C2-PLD subfamily. Requires Ca(2+) as cofactor.

It is found in the cytoplasm. It localises to the membrane. It carries out the reaction a 1,2-diacyl-sn-glycero-3-phosphocholine + H2O = a 1,2-diacyl-sn-glycero-3-phosphate + choline + H(+). Functionally, hydrolyzes glycerol-phospholipids at the terminal phosphodiesteric bond. Plays an important role in various cellular processes, including phytohormone action, vesicular trafficking, secretion, cytoskeletal arrangement, meiosis, tumor promotion, pathogenesis, membrane deterioration and senescence. This chain is Phospholipase D alpha 1 (PLD1), found in Brassica oleracea var. capitata (Cabbage).